The primary structure comprises 158 residues: Acetolactate synthase small subunit (158 aa).

In terms of domain architecture, ACT spans 4–79 (MIIAKLHNVT…DVIEVADITD (76 aa)).

Belongs to the acetolactate synthase small subunit family. Dimer of large and small chains.

It carries out the reaction 2 pyruvate + H(+) = (2S)-2-acetolactate + CO2. The protein operates within amino-acid biosynthesis; L-isoleucine biosynthesis; L-isoleucine from 2-oxobutanoate: step 1/4. It functions in the pathway amino-acid biosynthesis; L-valine biosynthesis; L-valine from pyruvate: step 1/4. This is Acetolactate synthase small subunit (ilvH) from Lactococcus lactis subsp. lactis (strain IL1403) (Streptococcus lactis).